The sequence spans 353 residues: uncharacterized protein (353 aa).

The protein belongs to the mimivirus L17x/L18x family.

This is an uncharacterized protein from Acanthamoeba polyphaga (Amoeba).